Reading from the N-terminus, the 122-residue chain is NADH-quinone oxidoreductase subunit A (122 aa).

Helical transmembrane passes span M10–G30, I66–V86, and L91–A111.

This sequence belongs to the complex I subunit 3 family. NDH-1 is composed of 14 different subunits. Subunits NuoA, H, J, K, L, M, N constitute the membrane sector of the complex.

The protein resides in the cell membrane. The catalysed reaction is a quinone + NADH + 5 H(+)(in) = a quinol + NAD(+) + 4 H(+)(out). Functionally, NDH-1 shuttles electrons from NADH, via FMN and iron-sulfur (Fe-S) centers, to quinones in the respiratory chain. The immediate electron acceptor for the enzyme in this species is believed to be a menaquinone. Couples the redox reaction to proton translocation (for every two electrons transferred, four hydrogen ions are translocated across the cytoplasmic membrane), and thus conserves the redox energy in a proton gradient. This is NADH-quinone oxidoreductase subunit A from Bacillus cereus (strain ATCC 14579 / DSM 31 / CCUG 7414 / JCM 2152 / NBRC 15305 / NCIMB 9373 / NCTC 2599 / NRRL B-3711).